The chain runs to 432 residues: MANNVVVLGTQWGDEGKGKIVDLLTEDAKYVVRYQGGHNAGHTLVIDGEKTVLHLIPSGILRNNVKCIIGNGVVLSPDALMKEMGPLEARGIPVRERLFLSEACPLILPYHIALDQAREIARGKKAIGTTGRGIGPAYEDKVARRGLRVGDLFDKEAFAEKLKEVMAYHNFQLEHYYNAEPVSYDEVLASVMAQADVLTAMVIDVTQELDDARKRGDKIMFEGAQGTLLDIDHGTYPYVTSSNTTAGGVAAGSGFGPRHLGYILGIAKAYCTRVGAGPFPTELDDAVGEHLGVKGNEFGATTGRKRRCGWFDAVAMRRAVQINSISGFCLTKLDVMDGLKEIKICTGYKTQDGKTLSVSPMAADAYENLELIYETMPGWSENTFGAKTLDALPQAALDYIARIEELTGVPIDIVSTGPDRNETIIKVHPYGE.

Residues 13 to 19 and 41 to 43 each bind GTP; these read GDEGKGK and GHT. Residue D14 is the Proton acceptor of the active site. Positions 14 and 41 each coordinate Mg(2+). IMP is bound by residues 14–17, 39–42, T130, R144, Q225, T240, and R304; these read DEGK and NAGH. H42 (proton donor) is an active-site residue. 300–306 contributes to the substrate binding site; sequence ATTGRKR. Residues R306, 332 to 334, and 415 to 417 contribute to the GTP site; these read KLD and STG.

The protein belongs to the adenylosuccinate synthetase family. In terms of assembly, homodimer. The cofactor is Mg(2+).

It is found in the cytoplasm. The enzyme catalyses IMP + L-aspartate + GTP = N(6)-(1,2-dicarboxyethyl)-AMP + GDP + phosphate + 2 H(+). It functions in the pathway purine metabolism; AMP biosynthesis via de novo pathway; AMP from IMP: step 1/2. Its function is as follows. Plays an important role in the de novo pathway of purine nucleotide biosynthesis. Catalyzes the first committed step in the biosynthesis of AMP from IMP. This is Adenylosuccinate synthetase from Photobacterium profundum (strain SS9).